The following is an 86-amino-acid chain: MKIELFLVVIFALAIHMATAEEVIESDIEPAERGCIKSGQRCGSPHGLPSNCCDDWKYKGRCGCTMGVCTCGKNCPSRGCDYRTKG.

An N-terminal signal peptide occupies residues methionine 1–alanine 20. The propeptide occupies glutamate 21–arginine 33. Disulfide bonds link cysteine 35–cysteine 53, cysteine 42–cysteine 62, cysteine 52–cysteine 71, and cysteine 64–cysteine 69. Lysine 85 carries the lysine amide modification.

The protein belongs to the neurotoxin 39 family. In terms of tissue distribution, expressed by the venom gland.

The protein localises to the secreted. Its function is as follows. Toxin active against S.frugiperda larvae. May act on sodium channels (Nav). In Loxosceles intermedia (Brown spider), this protein is U2-sicaritoxin-Li1b.